The primary structure comprises 536 residues: Putative UDP-glucuronosyltransferase ugt-47 (536 aa).

The first 21 residues, 1–21 (MMLQTSTILQLLLFLVGSVSA), serve as a signal peptide directing secretion. Residues Asn52 and Asn308 are each glycosylated (N-linked (GlcNAc...) asparagine). The chain crosses the membrane as a helical span at residues 497–517 (IIVPVLFVLLYCLIIPFFKLI).

The protein belongs to the UDP-glycosyltransferase family.

The protein localises to the membrane. The enzyme catalyses glucuronate acceptor + UDP-alpha-D-glucuronate = acceptor beta-D-glucuronoside + UDP + H(+). This is Putative UDP-glucuronosyltransferase ugt-47 (ugt-47) from Caenorhabditis briggsae.